Here is a 441-residue protein sequence, read N- to C-terminus: Cysteine--tRNA ligase (441 aa).

Cys-24 contributes to the Zn(2+) binding site. The 'HIGH' region signature appears at 26 to 36; the sequence is PTIYDYIHIGN. 3 residues coordinate Zn(2+): Cys-204, His-230, and Glu-234. Residues 262–266 carry the 'KMSKS' region motif; the sequence is KMSKS. ATP is bound at residue Lys-265.

The protein belongs to the class-I aminoacyl-tRNA synthetase family. As to quaternary structure, monomer. Zn(2+) serves as cofactor.

The protein resides in the cytoplasm. The catalysed reaction is tRNA(Cys) + L-cysteine + ATP = L-cysteinyl-tRNA(Cys) + AMP + diphosphate. This Mesoplasma florum (strain ATCC 33453 / NBRC 100688 / NCTC 11704 / L1) (Acholeplasma florum) protein is Cysteine--tRNA ligase.